A 350-amino-acid chain; its full sequence is Uroporphyrinogen decarboxylase (350 aa).

Residues 28–32 (RQAGR), Asp78, Tyr155, Ser210, and His325 each bind substrate.

This sequence belongs to the uroporphyrinogen decarboxylase family. Homodimer.

The protein localises to the cytoplasm. It carries out the reaction uroporphyrinogen III + 4 H(+) = coproporphyrinogen III + 4 CO2. The protein operates within porphyrin-containing compound metabolism; protoporphyrin-IX biosynthesis; coproporphyrinogen-III from 5-aminolevulinate: step 4/4. Catalyzes the decarboxylation of four acetate groups of uroporphyrinogen-III to yield coproporphyrinogen-III. This Picosynechococcus sp. (strain ATCC 27264 / PCC 7002 / PR-6) (Agmenellum quadruplicatum) protein is Uroporphyrinogen decarboxylase.